Reading from the N-terminus, the 392-residue chain is Chorismate synthase (392 aa).

NADP(+)-binding residues include R39 and R45. Residues 131-133 (RSS), 255-256 (NA), G300, 315-319 (KPIPT), and R341 contribute to the FMN site.

This sequence belongs to the chorismate synthase family. Homotetramer. FMNH2 is required as a cofactor.

The catalysed reaction is 5-O-(1-carboxyvinyl)-3-phosphoshikimate = chorismate + phosphate. The protein operates within metabolic intermediate biosynthesis; chorismate biosynthesis; chorismate from D-erythrose 4-phosphate and phosphoenolpyruvate: step 7/7. Catalyzes the anti-1,4-elimination of the C-3 phosphate and the C-6 proR hydrogen from 5-enolpyruvylshikimate-3-phosphate (EPSP) to yield chorismate, which is the branch point compound that serves as the starting substrate for the three terminal pathways of aromatic amino acid biosynthesis. This reaction introduces a second double bond into the aromatic ring system. This is Chorismate synthase from Leuconostoc mesenteroides subsp. mesenteroides (strain ATCC 8293 / DSM 20343 / BCRC 11652 / CCM 1803 / JCM 6124 / NCDO 523 / NBRC 100496 / NCIMB 8023 / NCTC 12954 / NRRL B-1118 / 37Y).